A 336-amino-acid polypeptide reads, in one-letter code: UPF0065 protein in tcbD-tcbE intergenic region (336 aa).

A signal peptide spans 1–32 (MHSSKCPDLANIGRRRVLAGIALAMTTSSTRA).

This sequence belongs to the UPF0065 (bug) family.

Its subcellular location is the periplasm. The chain is UPF0065 protein in tcbD-tcbE intergenic region from Pseudomonas sp. (strain P51).